We begin with the raw amino-acid sequence, 1150 residues long: Solute carrier family 12 member 6 (1150 aa).

The interval 1 to 108 is disordered; it reads MHPPEATTKM…GEHSQLLDDG (108 aa). Topologically, residues 1 to 135 are cytoplasmic; it reads MHPPEATTKM…DEYFDKNLAL (135 aa). Residues 28-45 are compositionally biased toward low complexity; that stretch reads LSDTSPDLSSRSSSRVRF. The residue at position 32 (S32) is a Phosphoserine. Positions 80 to 101 are enriched in polar residues; it reads DRTSNPQDVTEDPSQNSITGEH. S120 carries the phosphoserine modification. The discontinuously helical transmembrane segment at 136–158 threads the bilayer; the sequence is FEEEMDTRPKVSSLLNRMANYTN. Positions 147 and 148 each coordinate K(+). Position 148 is a phosphoserine (S148). N151 is a binding site for chloride. The Extracellular segment spans residues 159–165; it reads LTQGAKE. Residues 161-181 form a disordered region; the sequence is QGAKEHEEAENITEGKKKPTK. The span at 163–177 shows a compositional bias: basic and acidic residues; the sequence is AKEHEEAENITEGKK. The chain crosses the membrane as a helical span at residues 166 to 188; the sequence is HEEAENITEGKKKPTKSPQMGTF. Topologically, residues 189-211 are cytoplasmic; that stretch reads MGVYLPCLQNIFGVILFLRLTWV. A helical transmembrane segment spans residues 212–245; that stretch reads VGTAGILQAFAIVLICCCCTMLTAISMSAIATNG. Residues 246-263 are Extracellular-facing; the sequence is VVPAGGSYFMISRALGPE. The next 2 helical transmembrane spans lie at 264–287 and 288–316; these read FGGA…ILGA and IEIF…AMLN. K(+) is bound at residue Y283. Residues 317-433 lie on the Extracellular side of the membrane; it reads NMRVYGTAFL…FVHNNVISIQ (117 aa). Cysteines 375 and 390 form a disulfide. N379, N398, N411, and N417 each carry an N-linked (GlcNAc...) asparagine glycan. Cysteines 410 and 420 form a disulfide. A helical transmembrane segment spans residues 434–454; the sequence is GIPGLASGIITENLWSNYLPK. K(+) is bound by residues I443, T444, and N446. Chloride-binding residues include I443 and T444. 2 residues coordinate chloride: L447 and W448. Over 455–464 the chain is Cytoplasmic; it reads GEIIEKPSAK. Residues 465-487 form a helical membrane-spanning segment; sequence SSDVLGNLNHEYVLADITTSFTL. Over 488–518 the chain is Extracellular; the sequence is LVGIFFPSVTGIMAGSNRSGDLKDAQKSIPI. Position 497 (T497) interacts with K(+). A helical transmembrane segment spans residues 519 to 545; that stretch reads GTILAILTTSFVYLSNVVLFGACIEGV. Residues 546 to 568 are Cytoplasmic-facing; it reads VLRDKFGDAVKGNLVVGTLSWPS. Transmembrane regions (helical) follow at residues 569-589 and 590-612; these read PWVI…QSLT and GAPR…VFGH. Chloride is bound at residue I603. Residues 613–629 are Cytoplasmic-facing; the sequence is SKANGEPTWALLLTAAI. A run of 2 helical transmembrane segments spans residues 630–649 and 650–665; these read AELG…LSMF and FLMC…ALQT. Chloride is bound at residue Y654. Topologically, residues 666 to 1150 are cytoplasmic; it reads LLRTPNWRPR…GGSEVITIYS (485 aa). A scissor helix region spans residues 682–691; that stretch reads ALSFMGMSIC. Residue S736 is modified to Phosphoserine. Position 778 is a phosphothreonine (T778). At S981 the chain carries Phosphoserine. T991 is modified (phosphothreonine). S1023, S1029, and S1032 each carry phosphoserine. A Phosphothreonine modification is found at T1048. At Y1121 the chain carries Phosphotyrosine.

The protein belongs to the SLC12A transporter family. K/Cl co-transporter subfamily. In terms of assembly, homodimer; adopts a domain-swap conformation at the scissor helices connecting the transmembrane domain and C-terminal domain. Heterodimer with K-Cl cotransporter SLC12A5. Interacts (via C-terminus) with CKB; the interaction may be required for potassium-chloride cotransport activity. Post-translationally, phosphorylated, phosphorylation regulates transporter activity. Phosphorylated at Thr-991 and Thr-1048 by OXSR1/OSR1 and STK39/SPAK downstream of WNK kinases (WNK1, WNK2, WNK3 or WNK4), inhibiting the potassium-chloride cotransport activity. In terms of processing, N-glycosylated. Expressed in hippocampus and corpus callosum (at protein level). Highly expressed throughout the brain and detected at lower levels in kidney. Highly expressed in highly myelinated white matter of the brain, but not in gray matter. Detected in the corpus callosum, in packed cell layers of the hippocampus and in Purkinje neurons within the cerebellum. Highly expressed in white matter in the spinal cord, but not in dorsal root ganglia or sciatic nerve. Colocalizes with the oligodendrocyte marker CNP. Expressed in hippocampus in CA1, and to a lesser extent CA3 pyramidal cells. Also expressed in cortex, mostly in large neurons and in the large cerebellar Purkinje cells. In terms of tissue distribution, highly expressed in kidney, but not detected in brain.

It localises to the cell membrane. The protein localises to the basolateral cell membrane. The catalysed reaction is K(+)(in) + chloride(in) = K(+)(out) + chloride(out). Inhibited following phosphorylation by OXSR1/OSR1 and STK39/SPAK: phosphorylation takes place downstream of WNK kinases (WNK1, WNK2, WNK3 or WNK4) in response to hyperosmotic stress and subsequent cell shrinkage. Mediates electroneutral potassium-chloride cotransport when activated by cell swelling. May contribute to cell volume homeostasis in single cells. Its function is as follows. Mediates electroneutral potassium-chloride cotransport when activated by cell swelling. May contribute to cell volume homeostasis in single cells. This Mus musculus (Mouse) protein is Solute carrier family 12 member 6 (Slc12a6).